The chain runs to 161 residues: Large ribosomal subunit protein uL11 (161 aa).

Belongs to the universal ribosomal protein uL11 family. In terms of assembly, part of the ribosomal stalk of the 50S ribosomal subunit. Interacts with L10 and the large rRNA to form the base of the stalk. L10 forms an elongated spine to which L12 dimers bind in a sequential fashion forming a multimeric L10(L12)X complex.

Forms part of the ribosomal stalk which helps the ribosome interact with GTP-bound translation factors. In Methanococcoides burtonii (strain DSM 6242 / NBRC 107633 / OCM 468 / ACE-M), this protein is Large ribosomal subunit protein uL11.